Here is a 215-residue protein sequence, read N- to C-terminus: Probable Rab-related GTPase (215 aa).

Residue 20-27 participates in GTP binding; it reads GSSGVGKS. The Effector region signature appears at 42-50; the sequence is VSPTIGAAF. GTP-binding positions include 69 to 73 and 127 to 130; these read DTAGQ and NKID. 2 S-geranylgeranyl cysteine; by host lipidation sites follow: cysteine 211 and cysteine 212. A Cysteine methyl ester; by host modification is found at cysteine 212. The propeptide at 213–215 is removed in mature form; it reads YIS.

It belongs to the small GTPase superfamily. Rab family.

Its subcellular location is the host cell membrane. Functionally, may be involved in protein transport. In Acanthamoeba polyphaga mimivirus (APMV), this protein is Probable Rab-related GTPase.